The primary structure comprises 483 residues: Chromatin structure-remodeling complex protein RSC6 (483 aa).

Disordered stretches follow at residues 142–183 (KRKR…EAES) and 273–309 (AQDG…DKPE). Over residues 148–158 (SLSLPLNLQQP) the composition is skewed to low complexity. The segment covering 171-180 (DNGEDEDSAE) has biased composition (acidic residues).

To yeast SNF12. In terms of assembly, interacts directly with RSC8. Component of the two forms of the RSC complex composed of at least either RSC1 or RSC2, and ARP7, ARP9, LDB7, NPL6, RSC3, RSC30, RSC4, RSC58, RSC6, RSC8, RSC9, SFH1, STH1, HTL1 and probably RTT102. The complexes interact with histone and histone variant components of centromeric chromatin.

The protein localises to the nucleus. Functionally, component of the chromatin structure-remodeling complex (RSC), which is involved in transcription regulation and nucleosome positioning. RSC is responsible for the transfer of a histone octamer from a nucleosome core particle to naked DNA. The reaction requires ATP and involves an activated RSC-nucleosome intermediate. Remodeling reaction also involves DNA translocation, DNA twist and conformational change. As a reconfigurer of centromeric and flanking nucleosomes, RSC complex is required both for proper kinetochore function in chromosome segregation and, via a PKC1-dependent signaling pathway, for organization of the cellular cytoskeleton. This subunit is essential for mitotic growth and suppresses formamide sensitivity of the RSC8 mutants. The polypeptide is Chromatin structure-remodeling complex protein RSC6 (RSC6) (Saccharomyces cerevisiae (strain ATCC 204508 / S288c) (Baker's yeast)).